Here is a 350-residue protein sequence, read N- to C-terminus: Dihydroorotate dehydrogenase (quinone) (350 aa).

FMN-binding positions include 65–69 (AGLDK) and Thr89. Lys69 serves as a coordination point for substrate. 114-118 (NRLGF) contributes to the substrate binding site. Residues Asn149 and Asn182 each coordinate FMN. Asn182 is a substrate binding site. Ser185 functions as the Nucleophile in the catalytic mechanism. Asn187 is a substrate binding site. Positions 227 and 255 each coordinate FMN. Position 256 to 257 (256 to 257 (NT)) interacts with substrate. Residues Gly278, Gly307, and 328–329 (YT) each bind FMN.

Belongs to the dihydroorotate dehydrogenase family. Type 2 subfamily. In terms of assembly, monomer. The cofactor is FMN.

The protein resides in the cell membrane. It carries out the reaction (S)-dihydroorotate + a quinone = orotate + a quinol. It participates in pyrimidine metabolism; UMP biosynthesis via de novo pathway; orotate from (S)-dihydroorotate (quinone route): step 1/1. Its function is as follows. Catalyzes the conversion of dihydroorotate to orotate with quinone as electron acceptor. The chain is Dihydroorotate dehydrogenase (quinone) from Polaromonas naphthalenivorans (strain CJ2).